The sequence spans 105 residues: uncharacterized protein (105 aa).

This is an uncharacterized protein from Haemophilus influenzae (strain ATCC 51907 / DSM 11121 / KW20 / Rd).